The primary structure comprises 158 residues: Regulator of sigma D (158 aa).

The protein belongs to the Rsd/AlgQ family. Interacts with RpoD.

It localises to the cytoplasm. Functionally, binds RpoD and negatively regulates RpoD-mediated transcription activation by preventing the interaction between the primary sigma factor RpoD with the catalytic core of the RNA polymerase and with promoter DNA. May be involved in replacement of the RNA polymerase sigma subunit from RpoD to RpoS during the transition from exponential growth to the stationary phase. This is Regulator of sigma D from Shigella dysenteriae serotype 1 (strain Sd197).